Consider the following 890-residue polypeptide: Potassium/sodium hyperpolarization-activated cyclic nucleotide-gated channel 1 (890 aa).

Residues 1–93 (MEGGGKPNSS…AEGPRRQYGF (93 aa)) are disordered. Residues 1 to 142 (MEGGGKPNSS…WIIHPYSDFR (142 aa)) lie on the Cytoplasmic side of the membrane. A compositionally biased stretch (low complexity) spans 8 to 34 (NSSSNSRDDGNSVFPAKASATGAGPAA). Residues 62 to 77 (DGGGGGGGGGGGGEEP) show a composition bias toward gly residues. The chain crosses the membrane as a helical span at residues 143–164 (FYWDLIMLIMMVGNLVIIPVGI). The Extracellular portion of the chain corresponds to 165–173 (TFFTEQTTT). Residues 174–194 (PWIIFNVASDTVFLLDLIMNF) form a helical membrane-spanning segment. The Cytoplasmic portion of the chain corresponds to 195 to 215 (RTGTVNEDSSEIILDPKVIKM). Residues 216–236 (NYLKSWFVVDFISSIPVDYIF) traverse the membrane as a helical segment. At 237–260 (LIVEKGMDSEVYKTARALRIVRFT) the chain is on the extracellular side. The chain crosses the membrane as a helical; Voltage-sensor span at residues 261 to 281 (KILSLLRLLRLSRLIRYIHQW). Residues 282 to 295 (EEIFHMTYDLASAV) lie on the Cytoplasmic side of the membrane. Residues 296–318 (VRIFNLIGMMLLLCHWDGCLQFL) traverse the membrane as a helical segment. Residues 319 to 344 (VPLLQDFPPDCWVSLNEMVNDSWGKQ) are Extracellular-facing. An N-linked (GlcNAc...) asparagine glycan is attached at N338. Residues 345-366 (YSYALFKAMSHMLCIGYGAQAP) constitute an intramembrane region (pore-forming). The short motif at 358 to 362 (CIGYG) is the Selectivity filter element. The Extracellular segment spans residues 367 to 371 (VSMSD). The chain crosses the membrane as a helical span at residues 372 to 392 (LWITMLSMIVGATCYAMFVGH). Residues 393-890 (ATALIQSLDS…AEKPRFASNL (498 aa)) lie on the Cytoplasmic side of the membrane. 7 residues coordinate 3',5'-cyclic AMP: G539, E540, C542, R549, T550, R590, and R593. 2 stretches are compositionally biased toward low complexity: residues 644 to 691 (MTTL…PQPS) and 731 to 749 (QQQP…TQPQ). Disordered stretches follow at residues 644-692 (MTTL…QPSA), 725-796 (SQLS…LPHE), and 845-890 (MSSG…ASNL). Residues 770 to 780 (STQALHNTNLT) are compositionally biased toward polar residues. A compositionally biased stretch (pro residues) spans 854-865 (RGVPPAPPPPAA). Residues 880 to 890 (DAEKPRFASNL) are compositionally biased toward basic and acidic residues.

Belongs to the potassium channel HCN family. Homotetramer. Heterotetramer with HCN2. The potassium channel is composed of a homo- or heterotetrameric complex of pore-forming subunits. Interacts with KCNE2. Interacts with the SH3 domain of CSK. As to expression, detected in brain, in particular in amygdala and hippocampus, while expression in caudate nucleus, corpus callosum, substantia nigra, subthalamic nucleus and thalamus is very low or not detectable. Detected at very low levels in muscle and pancreas.

It localises to the cell membrane. It catalyses the reaction Na(+)(in) = Na(+)(out). The enzyme catalyses K(+)(in) = K(+)(out). Its activity is regulated as follows. Activated by cAMP, and at 10-100 times higher concentrations, also by cGMP. cAMP binding promotes tetramerization and formation of an active channel. Compared to other family members, cAMP has less stimulatory effect on HCN1 because part of the molecules already contain bound cAMP and form homotetramers when cAMP levels are low, this inherent tetramerization in HCN1 results in a weaker response to increased cAMP. Inhibited by Cs(1+), zatebradine, capsazepine and ZD7288. In terms of biological role, hyperpolarization-activated ion channel that are permeable to sodium and potassium ions. Displays lower selectivity for K(+) over Na(+) ions. Contributes to the native pacemaker currents in heart (If) and in the generation of the I(h) current which controls neuron excitability. Participates in cerebellar mechanisms of motor learning. May mediate responses to sour stimuli. The sequence is that of Potassium/sodium hyperpolarization-activated cyclic nucleotide-gated channel 1 (HCN1) from Homo sapiens (Human).